The chain runs to 218 residues: Small ribosomal subunit protein uS3 (218 aa).

The KH type-2 domain maps to 38 to 106 (IREYLTKRLS…RVHINIVEIK (69 aa)).

The protein belongs to the universal ribosomal protein uS3 family. As to quaternary structure, part of the 30S ribosomal subunit. Forms a tight complex with proteins S10 and S14.

Binds the lower part of the 30S subunit head. Binds mRNA in the 70S ribosome, positioning it for translation. The chain is Small ribosomal subunit protein uS3 from Anoxybacillus flavithermus (strain DSM 21510 / WK1).